Reading from the N-terminus, the 348-residue chain is D-alanine--D-alanine ligase (348 aa).

The ATP-grasp domain maps to 136 to 344 (KSVFKSYNLP…LEKLVASLIE (209 aa)). 171–226 (NKIINYPCFIKPANLGSSVGITKAYSKEEFITGIEFAAKYDERIIVEKSIEGRELE) is a binding site for ATP. 3 residues coordinate Mg(2+): Asp297, Glu311, and Asn313.

This sequence belongs to the D-alanine--D-alanine ligase family. The cofactor is Mg(2+). Mn(2+) serves as cofactor.

The protein resides in the cytoplasm. It catalyses the reaction 2 D-alanine + ATP = D-alanyl-D-alanine + ADP + phosphate + H(+). It participates in cell wall biogenesis; peptidoglycan biosynthesis. Cell wall formation. This is D-alanine--D-alanine ligase from Prochlorococcus marinus (strain NATL1A).